The following is a 94-amino-acid chain: uncharacterized protein (94 aa).

Residues 1–23 form a disordered region; the sequence is MVLLAGTRPQGGEARCMIPPPPS.

This is an uncharacterized protein from Homo sapiens (Human).